Consider the following 799-residue polypeptide: Cadherin-8 (799 aa).

Residues 1 to 29 (MPERLAETLMDLWTPLIILWITLPSCVYT) form the signal peptide. The propeptide occupies 30–61 (APMNQAHVLTTGSPLELSRQSEDMRILSRSKR). Cadherin domains follow at residues 62–167 (GWVW…APEF), 168–276 (LNGP…PPKF), 277–391 (AQSL…PPVF), 392–494 (SSPT…DNAP), and 495–616 (EFAS…YVLP). The Extracellular segment spans residues 62-621 (GWVWNQMFVL…AYVLPIGLSM (560 aa)). N188 carries N-linked (GlcNAc...) asparagine glycosylation. N-linked (GlcNAc...) asparagine glycans are attached at residues N463, N473, and N544. Residues 622–642 (GALIAILACIILLLVIVVLFV) form a helical membrane-spanning segment. Residues 643–799 (TLRRHKNEPL…YSVGESDKET (157 aa)) lie on the Cytoplasmic side of the membrane. Residue S795 is modified to Phosphoserine.

The protein localises to the cell membrane. Functionally, cadherins are calcium-dependent cell adhesion proteins. They preferentially interact with themselves in a homophilic manner in connecting cells; cadherins may thus contribute to the sorting of heterogeneous cell types. The polypeptide is Cadherin-8 (Cdh8) (Mus musculus (Mouse)).